Reading from the N-terminus, the 139-residue chain is Endoribonuclease YbeY (139 aa).

Zn(2+)-binding residues include His-110, His-114, and His-120.

Belongs to the endoribonuclease YbeY family. Requires Zn(2+) as cofactor.

The protein resides in the cytoplasm. In terms of biological role, single strand-specific metallo-endoribonuclease involved in late-stage 70S ribosome quality control and in maturation of the 3' terminus of the 16S rRNA. This chain is Endoribonuclease YbeY, found in Thermus thermophilus (strain ATCC BAA-163 / DSM 7039 / HB27).